Reading from the N-terminus, the 263-residue chain is Endonuclease 8 (263 aa).

Proline 2 serves as the catalytic Schiff-base intermediate with DNA. Residue glutamate 3 is the Proton donor of the active site. Lysine 53 functions as the Proton donor; for beta-elimination activity in the catalytic mechanism. DNA is bound by residues glutamine 70, arginine 125, and asparagine 169. The FPG-type zinc-finger motif lies at 229–263 (KVFHREGESCERCGGTIERTMLSSRPFYWCPHCQS). Catalysis depends on arginine 253, which acts as the Proton donor; for delta-elimination activity.

Belongs to the FPG family. Zn(2+) is required as a cofactor.

The enzyme catalyses 2'-deoxyribonucleotide-(2'-deoxyribose 5'-phosphate)-2'-deoxyribonucleotide-DNA = a 3'-end 2'-deoxyribonucleotide-(2,3-dehydro-2,3-deoxyribose 5'-phosphate)-DNA + a 5'-end 5'-phospho-2'-deoxyribonucleoside-DNA + H(+). In terms of biological role, involved in base excision repair of DNA damaged by oxidation or by mutagenic agents. Acts as a DNA glycosylase that recognizes and removes damaged bases. Has a preference for oxidized pyrimidines, such as thymine glycol, 5,6-dihydrouracil and 5,6-dihydrothymine. Has AP (apurinic/apyrimidinic) lyase activity and introduces nicks in the DNA strand. Cleaves the DNA backbone by beta-delta elimination to generate a single-strand break at the site of the removed base with both 3'- and 5'-phosphates. The chain is Endonuclease 8 from Pectobacterium atrosepticum (strain SCRI 1043 / ATCC BAA-672) (Erwinia carotovora subsp. atroseptica).